The following is a 614-amino-acid chain: ETS-related transcription factor Elf-1 (614 aa).

A phosphoserine mark is found at S110, S163, S167, and S168. The interval 159-199 (TYAHSPGPSSPEQPKRKKGRKTKPPRPDSPTTTPNISVKKK) is disordered. Over residues 173–182 (KRKKGRKTKP) the composition is skewed to basic residues. S187 is subject to Phosphoserine. The residue at position 190 (T190) is a Phosphothreonine. Residues 208–290 (IYLWEFLLAL…EGQRLVYQFK (83 aa)) constitute a DNA-binding region (ETS). Residues 303–371 (DPSCSIESSD…VQPSEALRTV (69 aa)) are disordered. Low complexity predominate over residues 310–335 (SSDPSLSSTATSSRNPASRSRASSSP). S430 is modified (phosphoserine).

This sequence belongs to the ETS family. In terms of assembly, binds to the underphosphorylated form of RB. May interact with other transcription factors in order to regulate specific genes. Interacts with RUNX1.

Its subcellular location is the nucleus. Its function is as follows. Transcription factor that activates the LYN and BLK promoters. The sequence is that of ETS-related transcription factor Elf-1 (ELF1) from Bos taurus (Bovine).